The primary structure comprises 1374 residues: F-actin-uncapping protein LRRC16A (1374 aa).

Met-1 carries the N-acetylmethionine modification. Position 122 is a phosphoserine (Ser-122). 10 LRR repeats span residues 245 to 269 (SNRL…LAGA), 275 to 298 (NSGL…SLSI), 304 to 327 (PKGL…SLCQ), 336 to 363 (ASTL…FLAQ), 391 to 418 (LQCL…SFKQ), 423 to 447 (SLAL…LLLG), 485 to 510 (IHNI…VWLS), 547 to 570 (DSPL…IINA), 574 to 597 (NTSL…MLAK), and 658 to 682 (LQKI…AYRL). The stretch at 714–738 (GDAIQEDLKAAERLMRDAKNSKTLL) forms a coiled coil. Thr-920 carries the phosphothreonine modification. 2 disordered regions span residues 961 to 982 (PFPS…PSEE) and 1040 to 1374 (KMDC…FIFV). An LRR 11 repeat occupies 962–985 (FPSVRQEKRSSGLISELPSEEGRR). Positions 962 to 1084 (FPSVRQEKRS…LIKSRSRSER (123 aa)) are inhibits capping activity of CP. Ser-972 carries the post-translational modification Phosphoserine. Positions 1040 to 1064 (KMDCKRSSSRSSDAHELGEGDEKKK) are enriched in basic and acidic residues. A necessary for localization at the cell membrane region spans residues 1058–1092 (EGDEKKKRDSRRSGFLNLIKSRSRSERPPTVLMTE). Ser-1096 is subject to Phosphoserine. Basic and acidic residues-rich tracts occupy residues 1108-1132 (TTRK…KTPE) and 1141-1150 (EAGRAERSDS). Residues 1191 to 1204 (VISQDPSSPVSCNT) show a composition bias toward polar residues. A Phosphothreonine modification is found at Thr-1229. The segment covering 1232–1244 (KNAKAEPRVDGGC) has biased composition (basic and acidic residues). A compositionally biased stretch (low complexity) spans 1245–1263 (RSRSSSSMPTSPKPLLQSP). Ser-1281, Ser-1289, Ser-1291, Ser-1295, Ser-1319, Ser-1328, and Ser-1335 each carry phosphoserine. Residues 1317–1330 (QNSSQSSPRSFSQE) are compositionally biased toward low complexity. Over residues 1343–1356 (QEQKQRSSGKDGHQ) the composition is skewed to basic and acidic residues. A Phosphoserine modification is found at Ser-1363.

Belongs to the CARMIL family. In terms of assembly, homodimer. Interacts (via C-terminus) with heterodimeric capping protein (CP); this interaction uncaps barbed ends capped by CP, enhances barbed-end actin polymerization and promotes lamellipodial formation and cell migration. Interacts with MYO1E. Interacts with TRIO.

Its subcellular location is the cytoplasm. The protein resides in the cytoskeleton. The protein localises to the cell membrane. It is found in the cell projection. It localises to the lamellipodium. Its function is as follows. Cell membrane-cytoskeleton-associated protein that plays a role in the regulation of actin polymerization at the barbed end of actin filaments. Prevents F-actin heterodimeric capping protein (CP) activity at the leading edges of migrating cells, and hence generates uncapped barbed ends and enhances actin polymerization, however, seems unable to nucleate filaments. Plays a role in lamellipodial protrusion formations and cell migration. The sequence is that of F-actin-uncapping protein LRRC16A from Mus musculus (Mouse).